A 266-amino-acid chain; its full sequence is Luciferase (266 aa).

A helical membrane pass occupies residues 22–41; sequence GLATACCAVAVASAIAFPYI.

Belongs to the fungal luciferase family.

The protein resides in the membrane. It catalyses the reaction 3-hydroxyhispidin + O2 = (E)-caffeoylpyruvate + hnu + CO2. It carries out the reaction 3-hydroxyhispidin + O2 = 4-[(E)-2-(3,4-dihydroxyphenyl)ethenyl]-1,7-dihydroxy-2,3,5-trioxabicyclo[2.2.2]oct-7-en-6-one. Luciferase; part of the gene cluster that mediates the fungal bioluminescence cycle. Uses the fungal luciferin 3-hydroxyhispidin as a substrate to produce an endoperoxide as a high-energy intermediate with decomposition that yields oxyluciferin (also known as caffeoylpyruvate) and light emission. The fungal bioluminescence cycle begins with the hispidin synthetase that catalyzes the formation of hispidin which is further hydroxylated by the hispidin-3-hydroxylase, yielding the fungal luciferin 3-hydroxyhispidin. The luciferase then produces an endoperoxide as a high-energy intermediate with decomposition that yields oxyluciferin and light emission. Oxyluciferin can be recycled to caffeic acid by caffeoylpyruvate hydrolase. This chain is Luciferase, found in Armillaria ostoyae (Armillaria root rot fungus).